The following is a 132-amino-acid chain: Small ribosomal subunit protein uS11 (132 aa).

The protein belongs to the universal ribosomal protein uS11 family. Part of the 30S ribosomal subunit. Interacts with proteins S7 and S18. Binds to IF-3.

Located on the platform of the 30S subunit, it bridges several disparate RNA helices of the 16S rRNA. Forms part of the Shine-Dalgarno cleft in the 70S ribosome. This Bifidobacterium animalis subsp. lactis (strain AD011) protein is Small ribosomal subunit protein uS11.